The following is a 101-amino-acid chain: Small ribosomal subunit protein uS14 (101 aa).

Belongs to the universal ribosomal protein uS14 family. In terms of assembly, part of the 30S ribosomal subunit. Contacts proteins S3 and S10.

Binds 16S rRNA, required for the assembly of 30S particles and may also be responsible for determining the conformation of the 16S rRNA at the A site. This Citrobacter koseri (strain ATCC BAA-895 / CDC 4225-83 / SGSC4696) protein is Small ribosomal subunit protein uS14.